A 78-amino-acid chain; its full sequence is RNA-binding protein Hfq (78 aa).

A Sm domain is found at aspartate 10–valine 69.

It belongs to the Hfq family. In terms of assembly, homohexamer.

Its function is as follows. RNA chaperone that binds small regulatory RNA (sRNAs) and mRNAs to facilitate mRNA translational regulation in response to envelope stress, environmental stress and changes in metabolite concentrations. Also binds with high specificity to tRNAs. This is RNA-binding protein Hfq from Bordetella petrii (strain ATCC BAA-461 / DSM 12804 / CCUG 43448).